A 363-amino-acid polypeptide reads, in one-letter code: Capsid protein (363 aa).

The stretch at 72–111 (KKVEELNESLKAAILAGAEAEDLRNKLKDISQRYASQLEI) forms a coiled coil. Positions 122-144 (LKKKGHEQPLTGSGSSEPVHAES) are disordered.

It is found in the virion. This Citrus leaf blotch virus (isolate Nagami kumquat/France/SRA-153/1984) (CLBV) protein is Capsid protein.